The following is a 139-amino-acid chain: ATP synthase epsilon chain (139 aa).

The protein belongs to the ATPase epsilon chain family. F-type ATPases have 2 components, CF(1) - the catalytic core - and CF(0) - the membrane proton channel. CF(1) has five subunits: alpha(3), beta(3), gamma(1), delta(1), epsilon(1). CF(0) has three main subunits: a, b and c.

The protein localises to the cell inner membrane. In terms of biological role, produces ATP from ADP in the presence of a proton gradient across the membrane. The chain is ATP synthase epsilon chain from Pseudomonas putida (strain ATCC 47054 / DSM 6125 / CFBP 8728 / NCIMB 11950 / KT2440).